Here is a 189-residue protein sequence, read N- to C-terminus: MTKLENPVLMATIGGAQGLRGEVRAKAYTADPGALGDYGHLHSMDGRSFEVLEIREMKNVVVVRFRGVNDRNAAEALNGLELYIERDNLPDEELDEDEFYYADLEGLEARDDKGVSYGTVTGVFDFGAGDLLELKGPGKRPVLIPFSEASVLEIDLEAGTLLIDPLAAGLVDDPEELSKFTPDKPKKKK.

The region spanning 96–169 (EDEFYYADLE…TLLIDPLAAG (74 aa)) is the PRC barrel domain.

This sequence belongs to the RimM family. Binds ribosomal protein uS19.

Its subcellular location is the cytoplasm. Its function is as follows. An accessory protein needed during the final step in the assembly of 30S ribosomal subunit, possibly for assembly of the head region. Essential for efficient processing of 16S rRNA. May be needed both before and after RbfA during the maturation of 16S rRNA. It has affinity for free ribosomal 30S subunits but not for 70S ribosomes. In Rhizobium johnstonii (strain DSM 114642 / LMG 32736 / 3841) (Rhizobium leguminosarum bv. viciae), this protein is Ribosome maturation factor RimM.